Here is an 88-residue protein sequence, read N- to C-terminus: MAVVLRLSRAGTHKAPFYHVVATDSRNARDGKYLEDVGIYDPTKRPERIELKVERIEHWLKAGAKPSQTVAMILKRAAKAAAPVAPKA.

This sequence belongs to the bacterial ribosomal protein bS16 family.

This is Small ribosomal subunit protein bS16 from Anaeromyxobacter sp. (strain K).